A 521-amino-acid chain; its full sequence is Glucose-1-phosphate adenylyltransferase large subunit 2, chloroplastic/amyloplastic (521 aa).

The transit peptide at Met-1 to Cys-47 directs the protein to the chloroplast.

The protein belongs to the bacterial/plant glucose-1-phosphate adenylyltransferase family. In terms of assembly, heterotetramer. Abundant in the embryo and is also present in the endosperm.

It is found in the plastid. It localises to the chloroplast. The protein localises to the amyloplast. The enzyme catalyses alpha-D-glucose 1-phosphate + ATP + H(+) = ADP-alpha-D-glucose + diphosphate. Its pathway is glycan biosynthesis; starch biosynthesis. Its activity is regulated as follows. Activated by 3'phosphoglycerate, inhibited by orthophosphate. Allosteric regulation. In terms of biological role, this protein plays a role in synthesis of starch. It catalyzes the synthesis of the activated glycosyl donor, ADP-glucose from Glc-1-P and ATP. The polypeptide is Glucose-1-phosphate adenylyltransferase large subunit 2, chloroplastic/amyloplastic (AGP2) (Zea mays (Maize)).